Here is a 685-residue protein sequence, read N- to C-terminus: E3 ubiquitin-protein ligase RNF103 (685 aa).

A run of 4 helical transmembrane segments spans residues phenylalanine 6 to valine 26, leucine 326 to glutamine 346, leucine 366 to phenylalanine 386, and methionine 411 to isoleucine 431. The span at glutamate 526–asparagine 543 shows a compositional bias: acidic residues. A disordered region spans residues glutamate 526–glutamate 550. The RING-type zinc-finger motif lies at cysteine 621–arginine 663.

Interacts with DERL1 and VCP. Highly expressed in the normal cerebellum but not in the cerebral cortex.

The protein resides in the endoplasmic reticulum membrane. It carries out the reaction S-ubiquitinyl-[E2 ubiquitin-conjugating enzyme]-L-cysteine + [acceptor protein]-L-lysine = [E2 ubiquitin-conjugating enzyme]-L-cysteine + N(6)-ubiquitinyl-[acceptor protein]-L-lysine.. The protein operates within protein modification; protein ubiquitination. Its function is as follows. Acts as an E2-dependent E3 ubiquitin-protein ligase, probably involved in the ER-associated protein degradation pathway. The sequence is that of E3 ubiquitin-protein ligase RNF103 (RNF103) from Homo sapiens (Human).